The chain runs to 266 residues: UPF0354 protein Lm4b_01619 (266 aa).

Belongs to the UPF0354 family.

This chain is UPF0354 protein Lm4b_01619, found in Listeria monocytogenes serotype 4b (strain CLIP80459).